The primary structure comprises 468 residues: Effector protein hopD2 (468 aa).

Over residues 1-20 (MNPLQPIQHSITNSQMSGGQ) the composition is skewed to polar residues. Residues 1–35 (MNPLQPIQHSITNSQMSGGQQLEAEGSQAHNSYSH) form a disordered region. Residues 143–468 (DASSPPSAND…TQWRAKIALE (326 aa)) enclose the Tyrosine-protein phosphatase domain. Cys-378 functions as the Phosphocysteine intermediate in the catalytic mechanism.

As to quaternary structure, interacts with EFR and FLS2 (via the kinase and cytoplasmic domains).

The protein localises to the secreted. It carries out the reaction O-phospho-L-tyrosyl-[protein] + H2O = L-tyrosyl-[protein] + phosphate. With respect to regulation, inhibited by sodium orthovanadate. Functionally, effector showing tyrosine-phosphatase activity required for host defense suppression. Functions inside plant cells causing suppression of HR (hypersensitive response), PR1 gene expression and oxidative burst probably by interfering with a MAPK (mitogen-activated protein kinase) pathway. MAPK cascades are known to activate defense-related transcription factors. Inhibits plant pattern-recognition receptors (PRRs) activation. In Pseudomonas syringae pv. tomato (strain ATCC BAA-871 / DC3000), this protein is Effector protein hopD2 (hopD2).